A 328-amino-acid chain; its full sequence is Formimidoylglutamase (328 aa).

Residues histidine 133, aspartate 159, histidine 161, aspartate 163, aspartate 253, and aspartate 255 each contribute to the Mn(2+) site.

This sequence belongs to the arginase family. It depends on Mn(2+) as a cofactor.

It catalyses the reaction N-formimidoyl-L-glutamate + H2O = formamide + L-glutamate. The protein operates within amino-acid degradation; L-histidine degradation into L-glutamate; L-glutamate from N-formimidoyl-L-glutamate (hydrolase route): step 1/1. Catalyzes the conversion of N-formimidoyl-L-glutamate to L-glutamate and formamide. This is Formimidoylglutamase from Streptococcus pyogenes serotype M1.